The chain runs to 84 residues: Esculentin-1Vb (84 aa).

The first 22 residues, 1-22 (MFTLKKPLLLIVLLGIISLSLC), serve as a signal peptide directing secretion. Positions 23–36 (EQERNADEDEESET) are excised as a propeptide. The cysteines at positions 78 and 84 are disulfide-linked.

Expressed by the skin glands.

Its subcellular location is the secreted. In terms of biological role, antimicrobial peptide. The polypeptide is Esculentin-1Vb (Odorrana versabilis (Chinese bamboo leaf odorous frog)).